A 336-amino-acid polypeptide reads, in one-letter code: MTALPSKNCSFQYQSHQAPRSLDATCLLLLIILGKVLLNVLILRVKRKDTSWSFMEYFCFSLALVDLLLLVNISVLTYFRDFVVLGIRFTNYHICLLTQIVSFAYGFLHYPVCSLACIDYWCNLSRATKPSSRWQKLLYLLTVILTWISVLAYVLGDPAISASLKTHKTSVNQCPSYVSTQSHWLSLSMLMILSVAFLISWQEVVALIQAIRIASYKNKAVLYFPFPPHTSYTVSPRAVLLPRLIVCFLGTWFPFVALQVLILSLRVQIPAYIEMNVPWLYFVNSFLIAAVYWFNCHKLYWRDGMFPVDPFINWKCCFVPVHRLKQVERPMSIIIC.

The Extracellular portion of the chain corresponds to 1–21 (MTALPSKNCSFQYQSHQAPRS). An N-linked (GlcNAc...) asparagine glycan is attached at asparagine 8. Residues 22 to 42 (LDATCLLLLIILGKVLLNVLI) traverse the membrane as a helical segment. Residues 43-56 (LRVKRKDTSWSFME) are Cytoplasmic-facing. The helical transmembrane segment at 57–77 (YFCFSLALVDLLLLVNISVLT) threads the bilayer. Residues 78–95 (YFRDFVVLGIRFTNYHIC) lie on the Extracellular side of the membrane. The chain crosses the membrane as a helical span at residues 96 to 116 (LLTQIVSFAYGFLHYPVCSLA). Residues 117–136 (CIDYWCNLSRATKPSSRWQK) are Cytoplasmic-facing. The helical transmembrane segment at 137–157 (LLYLLTVILTWISVLAYVLGD) threads the bilayer. Residues 158–187 (PAISASLKTHKTSVNQCPSYVSTQSHWLSL) lie on the Extracellular side of the membrane. A helical transmembrane segment spans residues 188 to 208 (SMLMILSVAFLISWQEVVALI). Topologically, residues 209-243 (QAIRIASYKNKAVLYFPFPPHTSYTVSPRAVLLPR) are cytoplasmic. Residues 244–264 (LIVCFLGTWFPFVALQVLILS) traverse the membrane as a helical segment. Residues 265 to 272 (LRVQIPAY) are Extracellular-facing. The helical transmembrane segment at 273-293 (IEMNVPWLYFVNSFLIAAVYW) threads the bilayer. Topologically, residues 294–336 (FNCHKLYWRDGMFPVDPFINWKCCFVPVHRLKQVERPMSIIIC) are cytoplasmic.

The protein belongs to the G-protein coupled receptor 1 family.

Its subcellular location is the cell membrane. Orphan receptor. In Rattus norvegicus (Rat), this protein is Probable G-protein coupled receptor 160 (Gpr160).